The sequence spans 325 residues: Small ribosomal subunit protein RACK1 (325 aa).

WD repeat units follow at residues 5–48 (QMKL…WDVD), 58–99 (IGRP…WDLN), 100–141 (QGVS…WNTL), 143–186 (QCKY…WNLG), 187–227 (NCRL…LWDL), 228–268 (NEGK…WDLE), and 269–320 (DKKE…YQVS).

It belongs to the WD repeat G protein beta family. Ribosomal protein RACK1 subfamily.

Required for the expression of antimicrobial peptide nlp-29 in response to fungal infection or physical injury. This is Small ribosomal subunit protein RACK1 (rack-1) from Caenorhabditis elegans.